Consider the following 464-residue polypeptide: Argininosuccinate lyase (464 aa).

Belongs to the lyase 1 family. Argininosuccinate lyase subfamily.

It is found in the cytoplasm. The enzyme catalyses 2-(N(omega)-L-arginino)succinate = fumarate + L-arginine. It participates in amino-acid biosynthesis; L-arginine biosynthesis; L-arginine from L-ornithine and carbamoyl phosphate: step 3/3. This chain is Argininosuccinate lyase, found in Streptococcus suis (strain 98HAH33).